The sequence spans 147 residues: Large ribosomal subunit protein uL13 (147 aa).

This sequence belongs to the universal ribosomal protein uL13 family. In terms of assembly, part of the 50S ribosomal subunit.

Its function is as follows. This protein is one of the early assembly proteins of the 50S ribosomal subunit, although it is not seen to bind rRNA by itself. It is important during the early stages of 50S assembly. The polypeptide is Large ribosomal subunit protein uL13 (Ligilactobacillus salivarius (strain UCC118) (Lactobacillus salivarius)).